Consider the following 137-residue polypeptide: Early nodulin-55-1 (137 aa).

The Phytocyanin domain occupies 1–67 (KYDERTESVH…GLKLMVVVMS (67 aa)). N-linked (GlcNAc...) asparagine glycosylation is found at asparagine 13, asparagine 51, and asparagine 68. Cysteine 20 and cysteine 55 are oxidised to a cystine. The segment at 70–115 (TKKKLIHSPSPSSPSPSPSPSPSPSPSPSPSLSSPSPSPLPNNQGV) is disordered. A compositionally biased stretch (pro residues) spans 80–98 (PSSPSPSPSPSPSPSPSPS).

Belongs to the early nodulin-like (ENODL) family.

The protein resides in the symbiosome. Its subcellular location is the peribacteroid membrane. Its function is as follows. May act as a carbohydrate transporter. This chain is Early nodulin-55-1, found in Glycine max (Soybean).